The chain runs to 1001 residues: Serine/threonine-protein kinase TAO1 (1001 aa).

Position 9 is a phosphoserine (S9). A Protein kinase domain is found at 28–281 (FTDLREIGHG…SEELLKHIFV (254 aa)). ATP is bound by residues 34–42 (IGHGSFGAV) and K57. Residue D151 is the Proton acceptor of the active site. The interval 324-433 (PAVEAQEEEE…QVSRHKSHYR (110 aa)) is disordered. Over residues 350–373 (SNQSIPSMSISASSQSSSVNSLPD) the composition is skewed to low complexity. Composition is skewed to basic and acidic residues over residues 375–388 (SDDK…EGDH) and 399–416 (LKPE…RTRA). Residues S421 and S445 each carry the phosphoserine modification. Residues 458–651 (SELREQMSGY…QTQKDLEHAM (194 aa)) adopt a coiled-coil conformation. Positions 567–587 (KEELNENQSTPKKEKQEWLSK) are disordered. Residues 577-587 (PKKEKQEWLSK) are compositionally biased toward basic and acidic residues. T669 is subject to Phosphothreonine. The stretch at 754–877 (KAVLKRLKEE…LERQAREIEA (124 aa)) forms a coiled coil. Residues 911–1001 (SHNPTGGPGP…ISNGSHMSYT (91 aa)) form a disordered region. S965 carries the phosphoserine modification. A compositionally biased stretch (polar residues) spans 975–1001 (GGRTEQGMSRSTSVTSQISNGSHMSYT).

Belongs to the protein kinase superfamily. STE Ser/Thr protein kinase family. STE20 subfamily. Self-associates. Interacts with MAP2K3. Interacts with SPRED1. Interacts with TESK1; the interaction inhibits TAOK1 kinase activity. Interacts with MAP3K7. Proteolytically processed by caspase-3 (CASP3). In terms of processing, autophosphorylated. Phosphorylated by ATM in response to DNA damage. Phosphorylated by LRRK2. In terms of tissue distribution, highly expressed in the testis, and to a lower extent also expressed in brain, placenta, colon and skeletal muscle.

The protein resides in the cytoplasm. The enzyme catalyses L-seryl-[protein] + ATP = O-phospho-L-seryl-[protein] + ADP + H(+). It carries out the reaction L-threonyl-[protein] + ATP = O-phospho-L-threonyl-[protein] + ADP + H(+). Its activity is regulated as follows. Serine/threonine-protein kinase activity is inhibited by SPRED1. In terms of biological role, serine/threonine-protein kinase involved in various processes such as p38/MAPK14 stress-activated MAPK cascade, DNA damage response and regulation of cytoskeleton stability. Phosphorylates MAP2K3, MAP2K6 and MARK2. Acts as an activator of the p38/MAPK14 stress-activated MAPK cascade by mediating phosphorylation and subsequent activation of the upstream MAP2K3 and MAP2K6 kinases. Involved in G-protein coupled receptor signaling to p38/MAPK14. In response to DNA damage, involved in the G2/M transition DNA damage checkpoint by activating the p38/MAPK14 stress-activated MAPK cascade, probably by mediating phosphorylation of MAP2K3 and MAP2K6. Acts as a regulator of cytoskeleton stability by phosphorylating 'Thr-208' of MARK2, leading to activate MARK2 kinase activity and subsequent phosphorylation and detachment of MAPT/TAU from microtubules. Also acts as a regulator of apoptosis: regulates apoptotic morphological changes, including cell contraction, membrane blebbing and apoptotic bodies formation via activation of the MAPK8/JNK cascade. Plays an essential role in the regulation of neuronal development in the central nervous system. Also plays a role in the regulation of neuronal migration to the cortical plate. The sequence is that of Serine/threonine-protein kinase TAO1 (TAOK1) from Homo sapiens (Human).